The primary structure comprises 384 residues: 1-deoxy-D-xylulose 5-phosphate reductoisomerase (384 aa).

Thr10, Gly11, Ser12, Ile13, Gly36, Asn38, and Asn122 together coordinate NADPH. A 1-deoxy-D-xylulose 5-phosphate-binding site is contributed by Lys123. Glu124 provides a ligand contact to NADPH. A Mn(2+)-binding site is contributed by Asp148. Residues Ser149, Glu150, Ser174, and His197 each contribute to the 1-deoxy-D-xylulose 5-phosphate site. Glu150 serves as a coordination point for Mn(2+). Gly203 lines the NADPH pocket. 1-deoxy-D-xylulose 5-phosphate contacts are provided by Ser210, Asn215, Lys216, and Glu219. Glu219 contributes to the Mn(2+) binding site.

It belongs to the DXR family. Requires Mg(2+) as cofactor. The cofactor is Mn(2+).

The enzyme catalyses 2-C-methyl-D-erythritol 4-phosphate + NADP(+) = 1-deoxy-D-xylulose 5-phosphate + NADPH + H(+). It participates in isoprenoid biosynthesis; isopentenyl diphosphate biosynthesis via DXP pathway; isopentenyl diphosphate from 1-deoxy-D-xylulose 5-phosphate: step 1/6. Catalyzes the NADPH-dependent rearrangement and reduction of 1-deoxy-D-xylulose-5-phosphate (DXP) to 2-C-methyl-D-erythritol 4-phosphate (MEP). In Geobacter metallireducens (strain ATCC 53774 / DSM 7210 / GS-15), this protein is 1-deoxy-D-xylulose 5-phosphate reductoisomerase.